We begin with the raw amino-acid sequence, 387 residues long: Adaptive-response sensory kinase SasA (387 aa).

Positions 1-97 (MGESLSPQAL…TDQLANQLPQ (97 aa)) are interacts with KaiC. The Histidine kinase domain occupies 158–382 (LVAHDLRNPL…TFHFTMPVYR (225 aa)). The residue at position 161 (H161) is a Phosphohistidine; by autocatalysis.

In terms of assembly, homooligomerizes. Part of the circadian clock (KaiA, KaiB, KaiC, CikA, RpaA, SasA), the composition of which varies during the circadian cycle. Binds to the CI domain of KaiC; KaiB(fs) and SasA compete for the binding site. Binds preferentially to doubly phosphorylated KaiC. Interacts with LdpA. Post-translationally, autophosphorylates in vitro.

It carries out the reaction ATP + protein L-histidine = ADP + protein N-phospho-L-histidine.. Its function is as follows. Member of the two-component regulatory system SasA/RpaA involved in genome-wide circadian gene expression. One of three clock output pathways. Participates in the KaiABC clock protein complex, which constitutes the main circadian regulator in cyanobacteria, via its interaction with KaiC. Required for robustness of the circadian rhythm of gene expression and involved in clock output. KaiC enhances the autophosphorylation activity of SasA, which then transfers its phosphate group to RpaA to activate it. Phosphotransfer is maximal when KaiC phosphorylation is active during the circadian cycle; this two-component system is activated by fully phosphorylated KaiC. A very robust clock is reconstituted with KaiA, KaiB, KaiC, SasA, CikA and RpaA; output is measured by transcription from an appropriate reporter. In addition to its output function, recruits fold-shifted KaiB (KaiB(fs)) to KaiC to cooperatively form the KaiB(6):KaiC(6) complex (independent of SasA kinase activity); at physiological concentrations increases their association. At higher concentrations SasA and KaiB(fs) compete to bind to KaiC. Mutations that decrease cooperativity nearly phenocopy a deletion mutation. Autophosphorylation and phosphotransfer activities are not essential for clock rhythms in continuous light, but they are essential for adaptation to light/dark cycles. This is Adaptive-response sensory kinase SasA from Synechococcus elongatus (strain ATCC 33912 / PCC 7942 / FACHB-805) (Anacystis nidulans R2).